The chain runs to 60 residues: Cytotoxin KJC3 (60 aa).

4 disulfides stabilise this stretch: cysteine 3-cysteine 21, cysteine 14-cysteine 38, cysteine 42-cysteine 53, and cysteine 54-cysteine 59.

It belongs to the three-finger toxin family. Short-chain subfamily. Type IA cytotoxin sub-subfamily. In terms of assembly, monomer in solution; Homodimer and oligomer in the presence of negatively charged lipids forming a pore with a size ranging between 20 and 30 Angstroms. In terms of tissue distribution, expressed by the venom gland.

It localises to the secreted. It is found in the target cell membrane. In terms of biological role, shows cytolytic activity on many different cells by forming pore in lipid membranes. In vivo, increases heart rate or kills the animal by cardiac arrest. In addition, it binds to heparin with high affinity, interacts with Kv channel-interacting protein 1 (KCNIP1) in a calcium-independent manner, and binds to integrin alpha-V/beta-3 (ITGAV/ITGB3) with moderate affinity. The protein is Cytotoxin KJC3 of Naja sputatrix (Malayan spitting cobra).